The primary structure comprises 155 residues: Transcriptional repressor NrdR (155 aa).

A zinc finger spans residues 3-34; it reads CPFCAANDTKVIDSRLVAEGDQVRRRRECVAC. The 91-residue stretch at 49 to 139 folds into the ATP-cone domain; the sequence is PRLIKQDGSR…VYRRFQDLNE (91 aa).

It belongs to the NrdR family. Zn(2+) is required as a cofactor.

Negatively regulates transcription of bacterial ribonucleotide reductase nrd genes and operons by binding to NrdR-boxes. The chain is Transcriptional repressor NrdR from Ectopseudomonas mendocina (strain ymp) (Pseudomonas mendocina).